The sequence spans 172 residues: Disulfide bond formation protein B (172 aa).

The Cytoplasmic segment spans residues 1–13; sequence MNWLAQLPTQRTP. The helical transmembrane segment at 14 to 30 threads the bilayer; sequence WLLFSGIVFLLEITALF. The Periplasmic portion of the chain corresponds to 31 to 48; that stretch reads FQYKMGLAPCIMCIYQRT. A disulfide bridge connects residues cysteine 40 and cysteine 43. A helical membrane pass occupies residues 49 to 64; that stretch reads AVLGLLIAGIIGTSNP. The Cytoplasmic portion of the chain corresponds to 65-71; it reads EHRGVRL. Residues 72–89 traverse the membrane as a helical segment; the sequence is LAYSVWAVSSVWGFIIAR. Residues 90–145 lie on the Periplasmic side of the membrane; that stretch reads EHIEMQTTTDPFAFSCEFEPNFPAFMPLHEWIPSFFAATGDCGNIDWQFAGLSMPA. A disulfide bridge connects residues cysteine 105 and cysteine 131. A helical transmembrane segment spans residues 146–164; the sequence is WMEVIFALFAATLFLLVTS. Topologically, residues 165 to 172 are cytoplasmic; it reads RLMTKRSL.

Belongs to the DsbB family.

It localises to the cell inner membrane. Functionally, required for disulfide bond formation in some periplasmic proteins. Acts by oxidizing the DsbA protein. This Pseudoalteromonas translucida (strain TAC 125) protein is Disulfide bond formation protein B.